We begin with the raw amino-acid sequence, 193 residues long: Large ribosomal subunit protein bL25 (193 aa).

Belongs to the bacterial ribosomal protein bL25 family. CTC subfamily. Part of the 50S ribosomal subunit; part of the 5S rRNA/L5/L18/L25 subcomplex. Contacts the 5S rRNA. Binds to the 5S rRNA independently of L5 and L18.

Functionally, this is one of the proteins that binds to the 5S RNA in the ribosome where it forms part of the central protuberance. In Hydrogenovibrio crunogenus (strain DSM 25203 / XCL-2) (Thiomicrospira crunogena), this protein is Large ribosomal subunit protein bL25.